The chain runs to 726 residues: Catalase-peroxidase (726 aa).

The segment at 1–33 (MSTSDDIHNTTATGKCPFHQGGHDQSAGAGTTT) is disordered. The segment at residues 105-226 (WHGAGTYRSI…LGATEMGLIY (122 aa)) is a cross-link (tryptophyl-tyrosyl-methioninium (Trp-Tyr) (with M-252)). His106 serves as the catalytic Proton acceptor. A cross-link (tryptophyl-tyrosyl-methioninium (Tyr-Met) (with W-105)) is located at residues 226 to 252 (YVNPEGPDHSGEPLSAAAAIRATFGNM). His267 provides a ligand contact to heme b.

This sequence belongs to the peroxidase family. Peroxidase/catalase subfamily. As to quaternary structure, homodimer or homotetramer. Requires heme b as cofactor. In terms of processing, formation of the three residue Trp-Tyr-Met cross-link is important for the catalase, but not the peroxidase activity of the enzyme.

The catalysed reaction is H2O2 + AH2 = A + 2 H2O. It catalyses the reaction 2 H2O2 = O2 + 2 H2O. In terms of biological role, bifunctional enzyme with both catalase and broad-spectrum peroxidase activity. This chain is Catalase-peroxidase, found in Escherichia coli (strain K12 / DH10B).